Reading from the N-terminus, the 2724-residue chain is Eukaryotic translation initiation factor 2-alpha kinase 2 (2724 aa).

The Cytoplasmic segment spans residues 1 to 24 (MLNMVDQKKGINNGSSTGVINNIN). The chain crosses the membrane as a helical span at residues 25–45 (GKIKNEFIFMYLIAAGGFSCV). Topologically, residues 46 to 673 (YKIKKKKSNK…KFYIKRHNQK (628 aa)) are extracellular. Residues 112–153 (KRERRGRRKEQQREQMGDKRREKRQQQRREKRKEQNTNTKKR) are disordered. The segment covering 120–146 (KEQQREQMGDKRREKRQQQRREKRKEQ) has biased composition (basic and acidic residues). Residues 674 to 694 (TYFFENIIFYHYIIMLFLDIE) form a helical membrane-spanning segment. Residues 695 to 718 (KYKNKFVSLFQYNLYRKLLKISKR) are Cytoplasmic-facing. A helical membrane pass occupies residues 719–739 (IVLMLHRIETNVICIFLLKHF). Over 740 to 800 (EDYFIRKGIH…KKNIFNFFIE (61 aa)) the chain is Extracellular. A helical membrane pass occupies residues 801 to 821 (LFLNNIQINIFKKFEILYLII). At 822 to 832 (YFYNYFEKSKQ) the chain is on the cytoplasmic side. The helical transmembrane segment at 833-853 (FDIEGIGDIIYVWLSLINLFY) threads the bilayer. Residues 854–876 (DDKGKCIKILSKIFAKLNKKLYY) are Extracellular-facing. Residues 877–897 (VYWGKLYIIMNWTTIVDTIFI) form a helical membrane-spanning segment. The Cytoplasmic portion of the chain corresponds to 898 to 908 (RNVLSINREGN). The helical transmembrane segment at 909–929 (YYWVIIVLKMINYFVNVAYTL) threads the bilayer. Residues 930-996 (TRMDIFFIKV…KKNYDIYTKY (67 aa)) are Extracellular-facing. A helical transmembrane segment spans residues 997–1017 (AILFIYCFIIQAYYFDTLFNI). Residues 1018–2724 (RSLESNEIAN…GDIFLPDKCP (1707 aa)) lie on the Cytoplasmic side of the membrane. Position 2029 (K2029) interacts with ATP. The Protein kinase domain maps to 2084–2719 (KHYFTKCGIL…KIISAGDIFL (636 aa)). The stretch at 2120–2155 (INTLNEENQNMFCKNKEKKEENYKKIDTNISQFSEK) forms a coiled coil. Catalysis depends on D2229, which acts as the Proton acceptor. The interval 2479–2507 (EKMDKNKIAAQKKKKKKENKHPIGRRSTN) is disordered. A compositionally biased stretch (basic residues) spans 2488–2502 (AQKKKKKKENKHPIG).

It belongs to the protein kinase superfamily. Ser/Thr protein kinase family. GCN2 subfamily. Post-translationally, auto-phosphorylated.

The protein localises to the membrane. It carries out the reaction L-seryl-[protein] + ATP = O-phospho-L-seryl-[protein] + ADP + H(+). It catalyses the reaction L-threonyl-[protein] + ATP = O-phospho-L-threonyl-[protein] + ADP + H(+). Its function is as follows. Phosphorylates translation factor eIF2alpha in salivary gland sporozoites during dormancy, which leads to an inhibition of protein translation and accumulation of stalled mRNAs into granules. The chain is Eukaryotic translation initiation factor 2-alpha kinase 2 from Plasmodium berghei (strain Anka).